We begin with the raw amino-acid sequence, 490 residues long: MSRMAEQQLYIHGGCTSATSGRTFETINPANGNVLATVQAAGREDVDRAVKSAQQGQKIWAAMTAMERSRILRRAVDILRERNDELAKLETLDTGKAYSETSTVDIVTGADVLEYYAGLIPALEGSQIPLRETSFVYTRHEPLGVVAGIGAWNYPIQIALWKSAPALAAGNAMIFKPSEVTPLTALKLAEIYSEAGLPDGVFNVLPGVGAETGQYLTEHPGIAKVSFTGGVASGKKVMANSAASSLKEVTMELGGKSPLIVFDDADLDLAADIAMMANFFSSGQVCTNGTRVFIPTKCKAAFEQKILARVERIRAGDVFDPQTNFGPLVSFPHRDNVLRYIAKGKEEGARVLCGGDVLKGDSFDNGAWVAPTVFTDCSDDMTIVREEIFGPVMSILTYESEDEVIRRANDTDYGLAAGIVTADLNRAHRVIHQLEAGICWINTWGESPAEMPVGGYKHSGIGRENGVMTLQSYTQVKSIQVEMAKFQSIF.

K(+) contacts are provided by threonine 26, isoleucine 27, and aspartate 93. 150-152 is a binding site for NAD(+); the sequence is GAW. Lysine 162 serves as the catalytic Charge relay system. 176-179 contributes to the NAD(+) binding site; sequence KPSE. Residue valine 180 participates in K(+) binding. NAD(+) is bound at residue 230-233; that stretch reads GVAS. Leucine 246 contacts K(+). The active-site Proton acceptor is glutamate 252. NAD(+) contacts are provided by glycine 254, cysteine 286, and glutamate 387. The active-site Nucleophile is the cysteine 286. Cysteine 286 is subject to Cysteine sulfenic acid (-SOH). Lysine 457 and glycine 460 together coordinate K(+). Glutamate 464 acts as the Charge relay system in catalysis.

This sequence belongs to the aldehyde dehydrogenase family. In terms of assembly, dimer of dimers. K(+) is required as a cofactor.

It carries out the reaction betaine aldehyde + NAD(+) + H2O = glycine betaine + NADH + 2 H(+). It participates in amine and polyamine biosynthesis; betaine biosynthesis via choline pathway; betaine from betaine aldehyde: step 1/1. In terms of biological role, involved in the biosynthesis of the osmoprotectant glycine betaine. Catalyzes the irreversible oxidation of betaine aldehyde to the corresponding acid. This Escherichia coli O7:K1 (strain IAI39 / ExPEC) protein is Betaine aldehyde dehydrogenase.